A 281-amino-acid polypeptide reads, in one-letter code: Para-Rep C9 (281 aa).

Residues 1-95 (MSAVNWVFTL…VAGPWSYGEL (95 aa)) enclose the CRESS-DNA virus Rep endonuclease domain. The RCR-1 motif lies at 7 to 10 (VFTL). 2 residues coordinate a divalent metal cation: glutamate 33 and histidine 39. The RCR-2 signature appears at 39-41 (HIQ). The Nuclear localization signal motif lies at 48 to 69 (KKAKMNTVKNIIGGNPHLEKMK). The active-site For DNA cleavage activity is tyrosine 78. The RCR-3 signature appears at 78 to 81 (YAQK). Glutamate 83 serves as a coordination point for a divalent metal cation. Positions 95–101 (LLKKGSH) match the Nuclear localization signal motif. 178-180 (GKS) provides a ligand contact to ATP.

It belongs to the nanoviridea/circoviridae replication-associated protein family. As to quaternary structure, homooligomer (Potential). Rep binds to repeated DNA motifs (iterons). Mg(2+) serves as cofactor. It depends on Mn(2+) as a cofactor.

It localises to the host nucleus. The catalysed reaction is ATP + H2O = ADP + phosphate + H(+). Its function is as follows. Initiates and terminates the replication only of its own subviral DNA molecule. The closed circular ssDNA genome is first converted to a superhelical dsDNA. Rep binds a specific hairpin at the genome origin of replication. Introduces an endonucleolytic nick within the intergenic region of the genome, thereby initiating the rolling circle replication (RCR). Following cleavage, binds covalently to the 5'-phosphate of DNA as a tyrosyl ester. The cleavage gives rise to a free 3'-OH that serves as a primer for the cellular DNA polymerase. The polymerase synthesizes the (+) strand DNA by rolling circle mechanism. After one round of replication, a Rep-catalyzed nucleotidyl transfer reaction releases a circular single-stranded virus genome, thereby terminating the replication. Displays origin-specific DNA cleavage, nucleotidyl transferase, ATPase and helicase activities. The chain is Para-Rep C9 (C9) from Faba bean necrotic yellows C9 alphasatellite (FBNYC9A).